A 484-amino-acid polypeptide reads, in one-letter code: tRNA-2-methylthio-N(6)-dimethylallyladenosine synthase (484 aa).

Residues 36–153 (GKLYIKTHGC…LPELIRARRE (118 aa)) enclose the MTTase N-terminal domain. Residues C45, C82, C116, C190, C194, and C197 each coordinate [4Fe-4S] cluster. The Radical SAM core domain occupies 176 to 415 (RAEGPSAFVS…HISAHAASIS (240 aa)). Residues 416–479 (QSMVGSVQRV…SNSLRGRIQL (64 aa)) enclose the TRAM domain. Residues 428–450 (EGPSRRDPNELTGKSENMRPVNF) are disordered.

Belongs to the methylthiotransferase family. MiaB subfamily. In terms of assembly, monomer. [4Fe-4S] cluster is required as a cofactor.

It is found in the cytoplasm. It catalyses the reaction N(6)-dimethylallyladenosine(37) in tRNA + (sulfur carrier)-SH + AH2 + 2 S-adenosyl-L-methionine = 2-methylsulfanyl-N(6)-dimethylallyladenosine(37) in tRNA + (sulfur carrier)-H + 5'-deoxyadenosine + L-methionine + A + S-adenosyl-L-homocysteine + 2 H(+). Catalyzes the methylthiolation of N6-(dimethylallyl)adenosine (i(6)A), leading to the formation of 2-methylthio-N6-(dimethylallyl)adenosine (ms(2)i(6)A) at position 37 in tRNAs that read codons beginning with uridine. The sequence is that of tRNA-2-methylthio-N(6)-dimethylallyladenosine synthase from Xanthomonas oryzae pv. oryzae (strain KACC10331 / KXO85).